The primary structure comprises 134 residues: Small ribosomal subunit protein bS16 (134 aa).

A disordered region spans residues 79–134 (AGIAKRPSRNNPTKGEPGKKAQERLALAKQAEEEASAKAAEAAAAAAAPAEEAASE). A compositionally biased stretch (low complexity) spans 115–134 (AKAAEAAAAAAAPAEEAASE).

Belongs to the bacterial ribosomal protein bS16 family.

This chain is Small ribosomal subunit protein bS16, found in Brucella abortus (strain S19).